The primary structure comprises 75 residues: UPF0352 protein PMI0824 (75 aa).

It belongs to the UPF0352 family.

This is UPF0352 protein PMI0824 from Proteus mirabilis (strain HI4320).